The sequence spans 535 residues: T-complex protein 1 subunit beta (535 aa).

A2 is modified (N-acetylalanine). Position 3 is a phosphoserine (S3). Position 13 is an N6-acetyllysine (K13). Residue G44 participates in ADP binding. G44 contacts ATP. S60 carries the post-translational modification Phosphoserine. D97 serves as a coordination point for Mg(2+). 4 residues coordinate ADP: G98, T99, T100, and S101. G98, T99, and T100 together coordinate ATP. The residue at position 154 (K154) is an N6-acetyllysine. Positions 168 and 169 each coordinate ADP. K181 is modified (N6-acetyllysine). Residue K248 forms a Glycyl lysine isopeptide (Lys-Gly) (interchain with G-Cter in SUMO2) linkage. Residue S260 is modified to Phosphoserine. T261 carries the post-translational modification Phosphothreonine. 3 residues coordinate ADP: G410, E495, and K500. Residues E495 and K500 each coordinate ATP.

The protein belongs to the TCP-1 chaperonin family. In terms of assembly, component of the chaperonin-containing T-complex (TRiC), a hexadecamer composed of two identical back-to-back stacked rings enclosing a protein folding chamber. Each ring is made up of eight different subunits: TCP1/CCT1, CCT2, CCT3, CCT4, CCT5, CCT6A/CCT6, CCT7, CCT8. Interacts with PACRG. Interacts with FLCN. Interacts with DLEC1. Interacts with SVEP1.

It is found in the cytoplasm. It carries out the reaction ATP + H2O = ADP + phosphate + H(+). Its function is as follows. Component of the chaperonin-containing T-complex (TRiC), a molecular chaperone complex that assists the folding of actin, tubulin and other proteins upon ATP hydrolysis. The TRiC complex mediates the folding of WRAP53/TCAB1, thereby regulating telomere maintenance. As part of the TRiC complex may play a role in the assembly of BBSome, a complex involved in ciliogenesis regulating transports vesicles to the cilia. The chain is T-complex protein 1 subunit beta (CCT2) from Bos taurus (Bovine).